The chain runs to 291 residues: Nucleotide-binding protein Athe_0320 (291 aa).

Position 9-16 (9-16 (GMSGAGKS)) interacts with ATP. GTP is bound at residue 60 to 63 (DIRG).

This sequence belongs to the RapZ-like family.

Functionally, displays ATPase and GTPase activities. The polypeptide is Nucleotide-binding protein Athe_0320 (Caldicellulosiruptor bescii (strain ATCC BAA-1888 / DSM 6725 / KCTC 15123 / Z-1320) (Anaerocellum thermophilum)).